A 624-amino-acid chain; its full sequence is Chaperone protein HtpG (624 aa).

The a; substrate-binding stretch occupies residues 1 to 336; sequence MKGQETRGFQ…SSDLPLNVSR (336 aa). Positions 337–552 are b; the sequence is EILQDSTVTR…ADEMSTQMAK (216 aa). The segment at 553 to 624 is c; the sequence is LFAAAGQKVP…IRRMNQLLVS (72 aa).

It belongs to the heat shock protein 90 family. Homodimer.

The protein localises to the cytoplasm. Molecular chaperone. Has ATPase activity. The protein is Chaperone protein HtpG of Escherichia coli O139:H28 (strain E24377A / ETEC).